The following is a 187-amino-acid chain: Ribosome-recycling factor (187 aa).

It belongs to the RRF family.

Its subcellular location is the cytoplasm. Functionally, responsible for the release of ribosomes from messenger RNA at the termination of protein biosynthesis. May increase the efficiency of translation by recycling ribosomes from one round of translation to another. The sequence is that of Ribosome-recycling factor from Rhodopseudomonas palustris (strain BisA53).